Consider the following 335-residue polypeptide: N-acetyl-gamma-glutamyl-phosphate reductase (335 aa).

C147 is a catalytic residue.

The protein belongs to the NAGSA dehydrogenase family. Type 1 subfamily.

It localises to the cytoplasm. The enzyme catalyses N-acetyl-L-glutamate 5-semialdehyde + phosphate + NADP(+) = N-acetyl-L-glutamyl 5-phosphate + NADPH + H(+). Its pathway is amino-acid biosynthesis; L-arginine biosynthesis; N(2)-acetyl-L-ornithine from L-glutamate: step 3/4. In terms of biological role, catalyzes the NADPH-dependent reduction of N-acetyl-5-glutamyl phosphate to yield N-acetyl-L-glutamate 5-semialdehyde. In Campylobacter hominis (strain ATCC BAA-381 / DSM 21671 / CCUG 45161 / LMG 19568 / NCTC 13146 / CH001A), this protein is N-acetyl-gamma-glutamyl-phosphate reductase.